Reading from the N-terminus, the 323-residue chain is tRNA dimethylallyltransferase (323 aa).

12–19 (GPTAAGKT) lines the ATP pocket. Position 14-19 (14-19 (TAAGKT)) interacts with substrate. 2 interaction with substrate tRNA regions span residues 37–40 (DSAL) and 161–165 (QRLSR).

This sequence belongs to the IPP transferase family. As to quaternary structure, monomer. Mg(2+) is required as a cofactor.

It catalyses the reaction adenosine(37) in tRNA + dimethylallyl diphosphate = N(6)-dimethylallyladenosine(37) in tRNA + diphosphate. In terms of biological role, catalyzes the transfer of a dimethylallyl group onto the adenine at position 37 in tRNAs that read codons beginning with uridine, leading to the formation of N6-(dimethylallyl)adenosine (i(6)A). In Pseudomonas fluorescens (strain Pf0-1), this protein is tRNA dimethylallyltransferase.